Consider the following 260-residue polypeptide: Ribosomal RNA small subunit methyltransferase J (260 aa).

S-adenosyl-L-methionine is bound by residues R101 to D102, E117 to R118, S153 to S154, and D176.

It belongs to the methyltransferase superfamily. RsmJ family.

Its subcellular location is the cytoplasm. It carries out the reaction guanosine(1516) in 16S rRNA + S-adenosyl-L-methionine = N(2)-methylguanosine(1516) in 16S rRNA + S-adenosyl-L-homocysteine + H(+). Its function is as follows. Specifically methylates the guanosine in position 1516 of 16S rRNA. The polypeptide is Ribosomal RNA small subunit methyltransferase J (Aliivibrio salmonicida (strain LFI1238) (Vibrio salmonicida (strain LFI1238))).